The primary structure comprises 245 residues: Uridylate kinase (245 aa).

Residue 15–18 (KLSG) participates in ATP binding. The segment at 23-28 (GDEGFG) is involved in allosteric activation by GTP. Glycine 57 is a binding site for UMP. 2 residues coordinate ATP: glycine 58 and arginine 62. UMP contacts are provided by residues aspartate 77 and 138–145 (TGNPFCTT). ATP is bound by residues threonine 165, tyrosine 171, and aspartate 174.

The protein belongs to the UMP kinase family. In terms of assembly, homohexamer.

The protein localises to the cytoplasm. It carries out the reaction UMP + ATP = UDP + ADP. The protein operates within pyrimidine metabolism; CTP biosynthesis via de novo pathway; UDP from UMP (UMPK route): step 1/1. With respect to regulation, allosterically activated by GTP. Inhibited by UTP. Catalyzes the reversible phosphorylation of UMP to UDP. The sequence is that of Uridylate kinase from Shewanella baltica (strain OS155 / ATCC BAA-1091).